Consider the following 1652-residue polypeptide: Venom factor (1652 aa).

The first 22 residues, 1-22 (MEGMALYLVAALLIGFPASSFG), serve as a signal peptide directing secretion. Residues Pro-519, Asp-542, Val-543, and Asp-545 each contribute to the Mg(2+) site. 12 cysteine pairs are disulfide-bonded: Cys-547–Cys-808, Cys-616–Cys-651, Cys-684–Cys-711, Cys-685–Cys-718, Cys-698–Cys-719, Cys-864–Cys-1502, Cys-1347–Cys-1478, Cys-1378–Cys-1447, Cys-1495–Cys-1500, Cys-1507–Cys-1579, Cys-1526–Cys-1650, and Cys-1626–Cys-1635. A propeptide spanning residues 657–740 (RRRRRSVVLL…REDELFLARS (84 aa)) is cleaved from the precursor. The interval 661 to 739 (RSVVLLDSKA…KREDELFLAR (79 aa)) is C3a-like domain. The region spanning 684-719 (CCEDGMHENPMGYSCEKREKYIQEGDACKAAFLECC) is the Anaphylatoxin-like domain. The interval 743 to 754 (EDEFFGEDNIIS) is factor B binding site. A propeptide spanning residues 992-1270 (HLIITPSGCG…VVGFQGLAEY (279 aa)) is cleaved from the precursor. Residues 992-1270 (HLIITPSGCG…VVGFQGLAEY (279 aa)) form a C3d-like domain region. Residues 1000 to 1003 (CGEQ) constitute a cross-link (isoglutamyl cysteine thioester (Cys-Gln)). The factor H binding site stretch occupies residues 1197–1260 (VLMAASTERN…GGTYGQTQAT (64 aa)). The region spanning 1507-1650 (CSLLNQQKKI…LSNTLTIFGC (144 aa)) is the NTR domain.

The protein belongs to the venom complement C3 homolog family. Heterotrimer of alpha, beta and gamma chains; disulfide-linked. Is active with factor B in the presence of factor D. Post-translationally, first processed by the removal of 4 Arg residues by furin-type protease, forming two chains, alpha and gamma/beta precursor, linked by a disulfide bond. Probably, a cobrin-like protease cleaves the C3a-like domain and then the C3d-like domain, generating the mature venom factor (VF). Expressed by the venom gland.

Its subcellular location is the secreted. Functionally, complement-activating protein in venom. It is a structural and functional analog of complement component C3b, the activated form of C3. It binds factor B (CFB), which is subsequently cleaved by factor D (CFD) to form the bimolecular complex VF/Bb. VF/Bb is a C3/C5 convertase that cleaves both complement components C3 and C5. Structurally, it resembles the C3b degradation product C3c, which is not able to form a C3/C5 convertase. Unlike C3b/Bb, VF/Bb is a stable complex and completely resistant to the actions of complement regulatory factors H (CFH) and I (CFI). Therefore, VF continuously activates complement resulting in the depletion of complement activity. This Crotalus adamanteus (Eastern diamondback rattlesnake) protein is Venom factor.